We begin with the raw amino-acid sequence, 632 residues long: Chaperone protein DnaK (632 aa).

Thr198 carries the phosphothreonine; by autocatalysis modification. Positions 524–557 are disordered; the sequence is RREAVDAKNHADSLVHSTEKALAEHGSKIEDSER.

This sequence belongs to the heat shock protein 70 family.

Acts as a chaperone. This is Chaperone protein DnaK from Nitrobacter hamburgensis (strain DSM 10229 / NCIMB 13809 / X14).